A 77-amino-acid polypeptide reads, in one-letter code: Acyl carrier protein (77 aa).

The Carrier domain occupies 1-77 (MSVEAKVKKI…DAIEYIRKKS (77 aa)). Residue S37 is modified to O-(pantetheine 4'-phosphoryl)serine.

This sequence belongs to the acyl carrier protein (ACP) family. 4'-phosphopantetheine is transferred from CoA to a specific serine of apo-ACP by AcpS. This modification is essential for activity because fatty acids are bound in thioester linkage to the sulfhydryl of the prosthetic group.

Its subcellular location is the cytoplasm. It functions in the pathway lipid metabolism; fatty acid biosynthesis. Functionally, carrier of the growing fatty acid chain in fatty acid biosynthesis. This Desulforapulum autotrophicum (strain ATCC 43914 / DSM 3382 / VKM B-1955 / HRM2) (Desulfobacterium autotrophicum) protein is Acyl carrier protein.